A 167-amino-acid polypeptide reads, in one-letter code: Large ribosomal subunit protein uL10 (167 aa).

The protein belongs to the universal ribosomal protein uL10 family. As to quaternary structure, part of the ribosomal stalk of the 50S ribosomal subunit. The N-terminus interacts with L11 and the large rRNA to form the base of the stalk. The C-terminus forms an elongated spine to which L12 dimers bind in a sequential fashion forming a multimeric L10(L12)X complex.

Its function is as follows. Forms part of the ribosomal stalk, playing a central role in the interaction of the ribosome with GTP-bound translation factors. This chain is Large ribosomal subunit protein uL10, found in Yersinia enterocolitica serotype O:8 / biotype 1B (strain NCTC 13174 / 8081).